The following is a 191-amino-acid chain: GTP cyclohydrolase 1 (191 aa).

Zn(2+) contacts are provided by cysteine 80, histidine 83, and cysteine 151.

The protein belongs to the GTP cyclohydrolase I family. As to quaternary structure, toroid-shaped homodecamer, composed of two pentamers of five dimers.

The enzyme catalyses GTP + H2O = 7,8-dihydroneopterin 3'-triphosphate + formate + H(+). It participates in cofactor biosynthesis; 7,8-dihydroneopterin triphosphate biosynthesis; 7,8-dihydroneopterin triphosphate from GTP: step 1/1. The sequence is that of GTP cyclohydrolase 1 from Nitrosospira multiformis (strain ATCC 25196 / NCIMB 11849 / C 71).